The following is a 250-amino-acid chain: Small ribosomal subunit protein uS3 (250 aa).

The KH type-2 domain maps to 39–107; the sequence is VREFLTKNLK…PAQVSINEID (69 aa). The interval 215–250 is disordered; it reads MNPAPAEERPAKRGRGRGEGQERRGRRGDRAADKGE. Basic and acidic residues predominate over residues 220–250; it reads AEERPAKRGRGRGEGQERRGRRGDRAADKGE.

It belongs to the universal ribosomal protein uS3 family. Part of the 30S ribosomal subunit. Forms a tight complex with proteins S10 and S14.

Functionally, binds the lower part of the 30S subunit head. Binds mRNA in the 70S ribosome, positioning it for translation. The polypeptide is Small ribosomal subunit protein uS3 (Acinetobacter baumannii (strain AB0057)).